The sequence spans 271 residues: uncharacterized protein (271 aa).

Disordered stretches follow at residues 50 to 93 (KKKT…SSSL) and 128 to 233 (KNNY…RKKV). Composition is skewed to low complexity over residues 61 to 93 (SPTK…SSSL) and 129 to 165 (NNYN…NNNN). The span at 169–179 (TDKKEGEKNEN) shows a compositional bias: basic and acidic residues. Composition is skewed to acidic residues over residues 180–199 (ENEN…DIIE) and 207–217 (MDEELENEQVE).

This is an uncharacterized protein from Dictyostelium discoideum (Social amoeba).